A 259-amino-acid polypeptide reads, in one-letter code: Protein unc-50 homolog (259 aa).

The residue at position 1 (M1) is an N-acetylmethionine. A compositionally biased stretch (polar residues) spans 1–17 (MLPSTSVNSPAQGNGVL). Residues 1–22 (MLPSTSVNSPAQGNGVLSSRDA) are disordered. Over 1-82 (MLPSTSVNSP…TKDQWARDDP (82 aa)) the chain is Cytoplasmic. S6 is modified (phosphoserine). The helical transmembrane segment at 83–103 (AFLVLLSIWLCVSTIGFGFVL) threads the bilayer. Residues 104–115 (DMGFFETIKLLL) lie on the Lumenal side of the membrane. The chain crosses the membrane as a helical span at residues 116–136 (WVVFIDCVGVGLLISTLMWFI). Over 137–163 (SNKYLVKRQSRDYDVEWGYAFDVHLNA) the chain is Cytoplasmic. Residues 164-184 (FYPLLVILHFIQLFFINHVIL) form a helical membrane-spanning segment. Residues 185 to 187 (TDT) are Lumenal-facing. Residues 188 to 208 (FIGYLVGNTLWLVAVGYYIYV) form a helical membrane-spanning segment. The Cytoplasmic portion of the chain corresponds to 209-222 (TFLGYSALPFLKNT). The chain crosses the membrane as a helical span at residues 223 to 243 (VILLYPFAPLILLYGLSLALG). Residues 244–259 (WNFTHTLCSFYKYRVK) lie on the Lumenal side of the membrane.

This sequence belongs to the unc-50 family.

It localises to the nucleus inner membrane. It is found in the golgi apparatus membrane. Functionally, involved in the cell surface expression of neuronal nicotinic receptors. Binds RNA. This Bos taurus (Bovine) protein is Protein unc-50 homolog (UNC50).